Here is a 611-residue protein sequence, read N- to C-terminus: MGSSKLKRAIGAVKDQTSVGLAKVGGRSSSLTELEIAVVKATRHDDYPAEDKYIREILCLTSYSRNYVSACVATLSRRLNKTKNWSVALKTLILIQRLLTDGDRAYEQEIFFATRRGTRLLNMSDFRDASQSDSWDYSAFVRTYALYLDERLDYRMQGRRGKKKSGGGGGGDGDSGEEDDHRGTSNDIRSKAIVVKSKPVAEMKTEKIFNRVQHLQQLLDRFLACRPTGNAKNNRVVIVAMYPIVKESFQLYYNITEIMGVLIERFMELDIHDSIKVYEIFCRVSKQFDELDPFYGWCKNMAVARSSEYPELEKITQKKLDLMDEFIRDKSALAAQTTKSSSKRSNKSEEEESKTEYIQENQEDLNSIKALPAPEQKEEEEEEEKMETKKDVEEVVSRQDQEGDLLDLTDEAGVTAGTVGDSLALALFDGVVGTESASGPGWEAFNDNSADWETDLVRSATRLSGQKSELGGGFDTLLLDGMYQYGAVNAAVKTSTAYGSSGSASSVAFGSAGSPAASMLALPAPPPTANGNRNSPVMVDPFAASLEVAPPAYVQMNDMEKKQRLLMEEQIMWDQYNRSGRQGHMNFGQNQQQQYYQLPYSMGPYSYTPRY.

In terms of domain architecture, ENTH spans 26–162 (GRSSSLTELE…DYRMQGRRGK (137 aa)). 2 disordered regions span residues 158–184 (GRRG…HRGT) and 337–406 (TTKS…GDLL). The segment covering 386-401 (METKKDVEEVVSRQDQ) has biased composition (basic and acidic residues).

It localises to the membrane. The protein resides in the clathrin-coated pit. The protein localises to the golgi apparatus. It is found in the cytoplasmic vesicle. Its subcellular location is the clathrin-coated vesicle. The polypeptide is Putative clathrin assembly protein At4g02650 (Arabidopsis thaliana (Mouse-ear cress)).